Here is a 350-residue protein sequence, read N- to C-terminus: Palmitoyltransferase erf2 (350 aa).

Topologically, residues 1–86 (MSYEKHSDAK…RLQMSSQYKA (86 aa)) are cytoplasmic. A helical transmembrane segment spans residues 87-107 (FLISLFALILPGVLFFIFSAF). The Lumenal segment spans residues 108–112 (WLWHH). A helical membrane pass occupies residues 113–133 (VSPAVPITFAYLYALAVVSMF). Residues 134-225 (KCSTADPGIL…NTCIGRRNYR (92 aa)) lie on the Cytoplasmic side of the membrane. The DHHC domain maps to 182–232 (VYCHTCHLYRPPRASHCHLCDNCVEYLDHHCIWLNTCIGRRNYRYYFIFLL). The active-site S-palmitoyl cysteine intermediate is the C212. Residues 226–246 (YYFIFLLSVVLSALYLTGLGF) form a helical membrane-spanning segment. Over 247 to 270 (YTSIGSFHESTDTNFAAHLRRPWA) the chain is Lumenal. A helical membrane pass occupies residues 271-291 (GVSFFLGIYGALGAILPGILF). The Cytoplasmic portion of the chain corresponds to 292–350 (CYQCYLISVGQNVHEYLRAKSTETEDVHPFHDSIWLNFLVVLCRPKNVSYVRPTRKSYV).

It belongs to the DHHC palmitoyltransferase family. ERF2/ZDHHC9 subfamily. In terms of assembly, interacts with erf4. Autopalmitoylated.

The protein localises to the endoplasmic reticulum membrane. It localises to the golgi apparatus. Its subcellular location is the golgi stack membrane. The catalysed reaction is L-cysteinyl-[protein] + hexadecanoyl-CoA = S-hexadecanoyl-L-cysteinyl-[protein] + CoA. Its function is as follows. The erf2-erf4 complex is a palmitoyltransferase with a major role in driving sexual development. Palmitoylates ras1. Palmitoylates isp3. Palmitoylates rho3. This chain is Palmitoyltransferase erf2, found in Schizosaccharomyces pombe (strain 972 / ATCC 24843) (Fission yeast).